The following is a 792-amino-acid chain: Phenylalanine--tRNA ligase beta subunit (792 aa).

Residues glycine 39–alanine 147 form the tRNA-binding domain. The B5 domain occupies proline 400–threonine 475. 4 residues coordinate Mg(2+): aspartate 453, aspartate 459, glutamate 462, and glutamate 463. The 94-residue stretch at serine 698–arginine 791 folds into the FDX-ACB domain.

The protein belongs to the phenylalanyl-tRNA synthetase beta subunit family. Type 1 subfamily. Tetramer of two alpha and two beta subunits. It depends on Mg(2+) as a cofactor.

The protein resides in the cytoplasm. The catalysed reaction is tRNA(Phe) + L-phenylalanine + ATP = L-phenylalanyl-tRNA(Phe) + AMP + diphosphate + H(+). This is Phenylalanine--tRNA ligase beta subunit from Xylella fastidiosa (strain Temecula1 / ATCC 700964).